A 108-amino-acid chain; its full sequence is Peptidyl-prolyl cis-trans isomerase FKBP1A (108 aa).

Residues G20 to E108 enclose the PPIase FKBP-type domain.

The protein belongs to the FKBP-type PPIase family. FKBP1 subfamily.

The protein localises to the cytoplasm. The catalysed reaction is [protein]-peptidylproline (omega=180) = [protein]-peptidylproline (omega=0). With respect to regulation, inhibited by both FK506 and rapamycin. Keeps in an inactive conformation TGFBR1, the TGF-beta type I serine/threonine kinase receptor, preventing TGF-beta receptor activation in absence of ligand. May modulate the RYR1 calcium channel activity. PPIases accelerate the folding of proteins. It catalyzes the cis-trans isomerization of proline imidic peptide bonds in oligopeptides. The chain is Peptidyl-prolyl cis-trans isomerase FKBP1A (fkbp1a) from Xenopus laevis (African clawed frog).